Consider the following 252-residue polypeptide: Imidazole glycerol phosphate synthase subunit HisF (252 aa).

Residues Asp11 and Asp130 contribute to the active site.

Belongs to the HisA/HisF family. In terms of assembly, heterodimer of HisH and HisF.

The protein localises to the cytoplasm. It carries out the reaction 5-[(5-phospho-1-deoxy-D-ribulos-1-ylimino)methylamino]-1-(5-phospho-beta-D-ribosyl)imidazole-4-carboxamide + L-glutamine = D-erythro-1-(imidazol-4-yl)glycerol 3-phosphate + 5-amino-1-(5-phospho-beta-D-ribosyl)imidazole-4-carboxamide + L-glutamate + H(+). The protein operates within amino-acid biosynthesis; L-histidine biosynthesis; L-histidine from 5-phospho-alpha-D-ribose 1-diphosphate: step 5/9. Functionally, IGPS catalyzes the conversion of PRFAR and glutamine to IGP, AICAR and glutamate. The HisF subunit catalyzes the cyclization activity that produces IGP and AICAR from PRFAR using the ammonia provided by the HisH subunit. This is Imidazole glycerol phosphate synthase subunit HisF from Citrifermentans bemidjiense (strain ATCC BAA-1014 / DSM 16622 / JCM 12645 / Bem) (Geobacter bemidjiensis).